A 20-amino-acid chain; its full sequence is Phospholipase A2 homolog P-elapitoxin-Aa1a gamma chain (20 aa).

This sequence belongs to the phospholipase A2 family. Group I subfamily. Heterotrimer of alpha, beta and gamma chains, each related to PLA2. In terms of processing, glycosylated. As to expression, expressed by the venom gland.

It is found in the secreted. Heterotrimer: Snake venom phospholipase A2 (PLA2) that has presynaptic neurotoxicity. Inhibits nerve-evoked twitch contractions but not responses to cholinergic agonists acetylcholine and carbachol and to depolarizing agonist KCl. Causes a fade in tetanic contractions. Displays a triphasic mode of action with depression, enhancement and blockade of neurotransmission. Does not display myotoxic activity such as changes in baseline muscle tension or inhibition of directly stimulated muscle twitches. All subunits are necessary for maximum toxicity. Functionally, monomer: the gamma chain has no significant enzymatic activity and is not toxic by itself. This Acanthophis antarcticus (Common death adder) protein is Phospholipase A2 homolog P-elapitoxin-Aa1a gamma chain.